The primary structure comprises 195 residues: Thioredoxin reductase-like selenoprotein T (195 aa).

Residues 1–19 (MRLLLLLLVAASAVVRSEA) form the signal peptide. Residues 46-49 (CVSU) constitute a cross-link (cysteinyl-selenocysteine (Cys-Sec)). Position 49 (U49) is a non-standard amino acid, selenocysteine. Residues 85-103 (IASFLSVFKLVLIGLIIVG) traverse the membrane as a helical segment.

Belongs to the SelWTH family. Selenoprotein T subfamily. In terms of processing, may contain a selenide-sulfide bond between Cys-46 and Sec-49. This bond is speculated to serve as redox-active pair. Ubiquitous. Highly expressed in the endocrine pancreas. Expressed at low levels in the adult brain.

Its subcellular location is the endoplasmic reticulum membrane. The catalysed reaction is [thioredoxin]-dithiol + NADP(+) = [thioredoxin]-disulfide + NADPH + H(+). In terms of biological role, selenoprotein with thioredoxin reductase-like oxidoreductase activity. Protects dopaminergic neurons against oxidative stress and cell death. Involved in ADCYAP1/PACAP-induced calcium mobilization and neuroendocrine secretion. Plays a role in fibroblast anchorage and redox regulation. In gastric smooth muscle, modulates the contraction processes through the regulation of calcium release and MYLK activation. In pancreatic islets, involved in the control of glucose homeostasis, contributes to prolonged ADCYAP1/PACAP-induced insulin secretion. The polypeptide is Thioredoxin reductase-like selenoprotein T (Mus musculus (Mouse)).